A 568-amino-acid polypeptide reads, in one-letter code: Urease subunit alpha (568 aa).

One can recognise a Urease domain in the interval 132–568 (GAIDTHVHYI…LPLAQLYNLF (437 aa)). Residues His137, His139, and Lys219 each coordinate Ni(2+). Residue Lys219 is modified to N6-carboxylysine. His221 is a substrate binding site. Positions 248 and 274 each coordinate Ni(2+). His322 serves as the catalytic Proton donor. Asp362 lines the Ni(2+) pocket.

Belongs to the metallo-dependent hydrolases superfamily. Urease alpha subunit family. In terms of assembly, heterotrimer of UreA (gamma), UreB (beta) and UreC (alpha) subunits. Three heterotrimers associate to form the active enzyme. It depends on Ni cation as a cofactor. Post-translationally, carboxylation allows a single lysine to coordinate two nickel ions.

Its subcellular location is the cytoplasm. It carries out the reaction urea + 2 H2O + H(+) = hydrogencarbonate + 2 NH4(+). It functions in the pathway nitrogen metabolism; urea degradation; CO(2) and NH(3) from urea (urease route): step 1/1. The chain is Urease subunit alpha from Azobacteroides pseudotrichonymphae genomovar. CFP2.